Consider the following 381-residue polypeptide: 1-deoxy-D-xylulose 5-phosphate reductoisomerase (381 aa).

Residues G13, S14, I15, N40, and N114 each contribute to the NADPH site. 1-deoxy-D-xylulose 5-phosphate is bound at residue K115. An NADPH-binding site is contributed by E116. A Mn(2+)-binding site is contributed by D140. S141, E142, S166, and H189 together coordinate 1-deoxy-D-xylulose 5-phosphate. E142 provides a ligand contact to Mn(2+). Position 195 (G195) interacts with NADPH. The 1-deoxy-D-xylulose 5-phosphate site is built by S202, N207, K208, and E211. E211 lines the Mn(2+) pocket.

This sequence belongs to the DXR family. Mg(2+) serves as cofactor. Requires Mn(2+) as cofactor.

It catalyses the reaction 2-C-methyl-D-erythritol 4-phosphate + NADP(+) = 1-deoxy-D-xylulose 5-phosphate + NADPH + H(+). It functions in the pathway isoprenoid biosynthesis; isopentenyl diphosphate biosynthesis via DXP pathway; isopentenyl diphosphate from 1-deoxy-D-xylulose 5-phosphate: step 1/6. Its function is as follows. Catalyzes the NADPH-dependent rearrangement and reduction of 1-deoxy-D-xylulose-5-phosphate (DXP) to 2-C-methyl-D-erythritol 4-phosphate (MEP). In Treponema denticola (strain ATCC 35405 / DSM 14222 / CIP 103919 / JCM 8153 / KCTC 15104), this protein is 1-deoxy-D-xylulose 5-phosphate reductoisomerase.